The primary structure comprises 51 residues: Micropeptide inhibiting actin cytoskeleton (51 aa).

Positions 1-22 are disordered; it reads MERAGVPGFSPRRSSVEAKMQS.

As to quaternary structure, interacts with aquaporin AQP2.

Reduces filamentous actin fibers by interacting with aquaporin AQP2 which leads to inhibition of the expression of SEPTIN4 and integrin ITGB4. Also inhibits the activation of the EREG/EGFR signaling pathway through interaction with AQP2. The chain is Micropeptide inhibiting actin cytoskeleton from Homo sapiens (Human).